Reading from the N-terminus, the 238-residue chain is Large ribosomal subunit protein uL1 (238 aa).

Belongs to the universal ribosomal protein uL1 family. In terms of assembly, part of the 50S ribosomal subunit.

Its function is as follows. Binds directly to 23S rRNA. The L1 stalk is quite mobile in the ribosome, and is involved in E site tRNA release. Protein L1 is also a translational repressor protein, it controls the translation of the L11 operon by binding to its mRNA. This is Large ribosomal subunit protein uL1 from Rickettsia prowazekii (strain Madrid E).